We begin with the raw amino-acid sequence, 504 residues long: uncharacterized protein (504 aa).

The next 3 helical transmembrane spans lie at 146–166 (TSAG…INIA), 196–216 (SSAA…ADVL), and 330–350 (SMAL…VAVA). Position 372–492 (372–492 (FLNIDVPLQA…EIAYGVARTR (121 aa))) interacts with a nucleoside 3',5'-cyclic phosphate.

It localises to the cell membrane. This is an uncharacterized protein from Mycobacterium tuberculosis (strain CDC 1551 / Oshkosh).